The chain runs to 495 residues: Cysteine--tRNA ligase (495 aa).

Cysteine 29 serves as a coordination point for Zn(2+). A 'HIGH' region motif is present at residues 31–41 (VTVYDDSHVGH). Zn(2+) contacts are provided by cysteine 209, histidine 234, and glutamate 238. The 'KMSKS' region motif lies at 266-270 (KMSKS). Lysine 269 is an ATP binding site.

Belongs to the class-I aminoacyl-tRNA synthetase family. As to quaternary structure, monomer. Zn(2+) serves as cofactor.

The protein resides in the cytoplasm. It catalyses the reaction tRNA(Cys) + L-cysteine + ATP = L-cysteinyl-tRNA(Cys) + AMP + diphosphate. The chain is Cysteine--tRNA ligase (cysS) from Aquifex aeolicus (strain VF5).